Reading from the N-terminus, the 537-residue chain is 2-isopropylmalate synthase (537 aa).

Residues Val-8–Glu-269 enclose the Pyruvate carboxyltransferase domain. The Mn(2+) site is built by Asp-17, His-208, His-210, and Asn-244. Positions Gln-408–Leu-537 are regulatory domain.

This sequence belongs to the alpha-IPM synthase/homocitrate synthase family. LeuA type 1 subfamily. In terms of assembly, homodimer. Mn(2+) is required as a cofactor.

It is found in the cytoplasm. It carries out the reaction 3-methyl-2-oxobutanoate + acetyl-CoA + H2O = (2S)-2-isopropylmalate + CoA + H(+). The protein operates within amino-acid biosynthesis; L-leucine biosynthesis; L-leucine from 3-methyl-2-oxobutanoate: step 1/4. Functionally, catalyzes the condensation of the acetyl group of acetyl-CoA with 3-methyl-2-oxobutanoate (2-ketoisovalerate) to form 3-carboxy-3-hydroxy-4-methylpentanoate (2-isopropylmalate). This chain is 2-isopropylmalate synthase, found in Synechococcus sp. (strain RCC307).